Reading from the N-terminus, the 253-residue chain is uncharacterized protein (253 aa).

The residue at position 2 (A2) is an N-acetylalanine.

The protein belongs to the NAD(P)-dependent epimerase/dehydratase family. In terms of assembly, homodimer.

This is an uncharacterized protein from Arabidopsis thaliana (Mouse-ear cress).